A 239-amino-acid polypeptide reads, in one-letter code: Ribonuclease PH (239 aa).

Phosphate contacts are provided by residues Arg-86 and 124–126; that span reads GTR.

It belongs to the RNase PH family. Homohexameric ring arranged as a trimer of dimers.

It carries out the reaction tRNA(n+1) + phosphate = tRNA(n) + a ribonucleoside 5'-diphosphate. Functionally, phosphorolytic 3'-5' exoribonuclease that plays an important role in tRNA 3'-end maturation. Removes nucleotide residues following the 3'-CCA terminus of tRNAs; can also add nucleotides to the ends of RNA molecules by using nucleoside diphosphates as substrates, but this may not be physiologically important. Probably plays a role in initiation of 16S rRNA degradation (leading to ribosome degradation) during starvation. The polypeptide is Ribonuclease PH (Sodalis glossinidius (strain morsitans)).